We begin with the raw amino-acid sequence, 320 residues long: D-amino-acid oxidase (320 aa).

The FAD site is built by Gly18, Gly19, Val20, Ile21, Thr47, Thr48, Ser49, Gly53, Gly54, Leu55, Val161, and Thr176. D-proline-binding residues include Tyr220 and Arg275. The D-serine site is built by Tyr220 and Arg275. Residues Arg275, Gly301, Gly302, Gly304, and Thr306 each coordinate FAD. Gly302 lines the D-proline pocket. Residue Gly302 coordinates D-serine.

The protein belongs to the DAMOX/DASOX family. The cofactor is FAD.

The protein resides in the cytoplasm. It localises to the secreted. Its subcellular location is the cell wall. It carries out the reaction a D-alpha-amino acid + O2 + H2O = a 2-oxocarboxylate + H2O2 + NH4(+). The catalysed reaction is D-leucine + O2 + H2O = 4-methyl-2-oxopentanoate + H2O2 + NH4(+). It catalyses the reaction D-valine + O2 + H2O = 3-methyl-2-oxobutanoate + H2O2 + NH4(+). The enzyme catalyses D-isoleucine + O2 + H2O = (R)-3-methyl-2-oxopentanoate + H2O2 + NH4(+). It carries out the reaction D-methionine + O2 + H2O = 4-methylsulfanyl-2-oxobutanoate + H2O2 + NH4(+). In terms of biological role, catalyzes the oxidative deamination of D-amino acids with broad substrate specificity. This is D-amino-acid oxidase from Streptomyces coelicolor (strain ATCC BAA-471 / A3(2) / M145).